The primary structure comprises 517 residues: ATP synthase subunit alpha (517 aa).

174 to 181 (GDRQTGKT) contacts ATP.

This sequence belongs to the ATPase alpha/beta chains family. F-type ATPases have 2 components, CF(1) - the catalytic core - and CF(0) - the membrane proton channel. CF(1) has five subunits: alpha(3), beta(3), gamma(1), delta(1), epsilon(1). CF(0) has three main subunits: a(1), b(2) and c(9-12). The alpha and beta chains form an alternating ring which encloses part of the gamma chain. CF(1) is attached to CF(0) by a central stalk formed by the gamma and epsilon chains, while a peripheral stalk is formed by the delta and b chains.

It localises to the cell inner membrane. It carries out the reaction ATP + H2O + 4 H(+)(in) = ADP + phosphate + 5 H(+)(out). Produces ATP from ADP in the presence of a proton gradient across the membrane. The alpha chain is a regulatory subunit. This Delftia acidovorans (strain DSM 14801 / SPH-1) protein is ATP synthase subunit alpha.